The chain runs to 79 residues: MNNVEKKIKKIISKILNIKVEKILNNASFLDDLSADSLDIVELIMAIEEEFDIEISDEDAEKLNTVQKSIDYINNKNKK.

The Carrier domain occupies 1 to 77; sequence MNNVEKKIKK…KSIDYINNKN (77 aa). O-(pantetheine 4'-phosphoryl)serine is present on Ser-37.

This sequence belongs to the acyl carrier protein (ACP) family. Post-translationally, 4'-phosphopantetheine is transferred from CoA to a specific serine of apo-ACP by AcpS. This modification is essential for activity because fatty acids are bound in thioester linkage to the sulfhydryl of the prosthetic group.

The protein localises to the cytoplasm. Its pathway is lipid metabolism; fatty acid biosynthesis. In terms of biological role, carrier of the growing fatty acid chain in fatty acid biosynthesis. The sequence is that of Acyl carrier protein from Buchnera aphidicola subsp. Schizaphis graminum (strain Sg).